A 1508-amino-acid chain; its full sequence is MFRNILSWFDSTPQPPPQQQEQQPEQPLEPPKVVSKNEARILTDQLPAPDSQRSQRYDRINNNKNNNNSNVDPLGNKDIFSSSPSTSTTTTTKSSSTTTTTTTSSSSNKQQPLYEDEPPLIVHELTSKGKRPPSPIFKEESSSQLILDTWEINSSDDESNSKNDFKGFMSQLESSNLNEKYITSNIYQKYEFFQKRDSEEDLFPSPEPIKKKQSNDLEKNIFDDDDDDDIFKNKQSTVTKPKQPQQQQKQPIVKKKVEEESLFGDSSLSLDSPLLASKSSPPKSSVNLSPQLFKEDSFDIDSFLSNDFDFKSKKSNNTTTVKKAVPISKSKPQQPPQKEEIKEVSTQKDNSNSNNNNGWVSVDEKPKERSTSKSKIGIQKTVTVKSNNSFENDIFGSTTTNDDGGDNDFSFTPATTPSSSSSTKATTTSPSSTTTTKSNINIGQKSNKSVDQADQFLNDIFQQEEQDKKRREEEAKLKQQQKQKEKEQIKDEIDDLFKFSKPTTTTTSTPSKSTTSIVDINSIEKKFSKSAANATTTNNDNNNNNNNTSSPTNKSTNLFNDWEKEEEIKVKEELDKKKKIEQEKKLEQEKKLIEEKKRIAEEKRISDEILAKKQLAEKLEKERIEKELEDLRLAKELEEKRLLALRQEKELAEKLKRERLEKEAEDKRIAQEIERKRLEKEKQDQLEKQRKLEQQRLQKEKDEKELADRLEKERIENEIKEKQKQLEKIKLEKELAEKKEKERLQKEADEKRIADQLEFERLLKLKQEKELAEKLEKERLEKEAAAEEKRIAAEKLEKQRLEKEAEEKRIAQDLERKRLEKEAEEKRIAQDLERKRLEKEAEEKRIAAEKLKQQQELAAKLEKERLEKEAEEKRIAQEKRIAEENRIAQEKKIAEELEKKRLQKEEQDRLAAAELERKRLEKEAEEKRIAQELEKKRLEKEAAEVKRIADEAAAAAKLEKERLEKEAEEKRIADEAAAAAKLEKERLEKEAAAAEEKRIADEAAAEAKLEKERLEKEKRIADEAAAEAAAALLQQKIEKEKEERDRIAKENKELKEKEDKERKEQRQRERQEKEQERARALKEKIEKEKERLNQQKLDQEKEEREREQRERKEQQEREENEKQLEKEREEKERREKLKQRNEQLEKERQERFKKDQEEKEKQLKEQQQQQKVIIPTTTTTTIRERSNSDSDALLNLPDSASSSSHSELVHLTLGRSKAKGRKKPTRRELTKDGNRNKQNIPNLKELKPSTVIIPDDDDDQSQKQQSEEVEEKPVAVKKMPIGFNPGMMMPKFDPSAVKLKSSAKPPSTNTTTTTTTAPQQPVQFNLKPVALKPTVTQTTTTTTTPPTTPPSSSVQLKPAATRSFSGSSFMGINSTTPTTPPTTPPSLKKSAAKDAGMKALDVLLQWLKDQTAGYEGVNIKDFTSSWYDGIAYLALVHRFKPSLIGDWKSFPKNDRVANYKLAFSLAEKHLGVTAFIDADDLAQLPSMERLSNITYLSEFFKVMKRGGF.

Disordered regions lie at residues 1-165 (MFRN…KNDF), 197-290 (DSEE…NLSP), 309-518 (DFKS…TSIV), 531-561 (AANATTTNNDNNNNNNNTSSPTNKSTNLFND), 680-706 (KEKQDQLEKQRKLEQQRLQKEKDEKEL), and 1036-1391 (KIEK…KKSA). Positions 81-107 (SSSPSTSTTTTTKSSSTTTTTTTSSSS) are enriched in low complexity. The span at 208-222 (PIKKKQSNDLEKNIF) shows a compositional bias: basic and acidic residues. Low complexity-rich tracts occupy residues 234 to 251 (KQSTVTKPKQPQQQQKQP), 263 to 290 (FGDSSLSLDSPLLASKSSPPKSSVNLSP), and 315 to 332 (SNNTTTVKKAVPISKSKP). 2 stretches are compositionally biased toward basic and acidic residues: residues 337 to 346 (QKEEIKEVST) and 362 to 371 (VDEKPKERST). A compositionally biased stretch (polar residues) spans 380–391 (KTVTVKSNNSFE). The span at 395 to 438 (FGSTTTNDDGGDNDFSFTPATTPSSSSSTKATTTSPSSTTTTKS) shows a compositional bias: low complexity. Residues 439–452 (NINIGQKSNKSVDQ) show a composition bias toward polar residues. The stretch at 455-498 (QFLNDIFQQEEQDKKRREEEAKLKQQQKQKEKEQIKDEIDDLFK) forms a coiled coil. A compositionally biased stretch (basic and acidic residues) spans 465–498 (EQDKKRREEEAKLKQQQKQKEKEQIKDEIDDLFK). Composition is skewed to low complexity over residues 500-516 (SKPTTTTTSTPSKSTTS) and 531-557 (AANATTTNNDNNNNNNNTSSPTNKSTN). The segment covering 1036 to 1164 (KIEKEKEERD…DQEEKEKQLK (129 aa)) has biased composition (basic and acidic residues). Composition is skewed to low complexity over residues 1165–1181 (EQQQQQKVIIPTTTTTT) and 1189–1206 (DSDALLNLPDSASSSSHS). Positions 1216-1225 (SKAKGRKKPT) are enriched in basic residues. Over residues 1226–1235 (RRELTKDGNR) the composition is skewed to basic and acidic residues. Positions 1333–1355 (PTVTQTTTTTTTPPTTPPSSSVQ) are enriched in low complexity. Residues 1362-1374 (RSFSGSSFMGINS) are compositionally biased toward polar residues. Residues 1397–1504 (MKALDVLLQW…YLSEFFKVMK (108 aa)) enclose the Calponin-homology (CH) domain.

This is Calponin homology domain-containing protein DDB_G0272472 from Dictyostelium discoideum (Social amoeba).